A 326-amino-acid chain; its full sequence is 4-hydroxythreonine-4-phosphate dehydrogenase (326 aa).

Substrate-binding residues include histidine 132 and threonine 133. Residues histidine 162, histidine 207, and histidine 262 each contribute to the a divalent metal cation site. 3 residues coordinate substrate: lysine 270, asparagine 279, and arginine 288.

It belongs to the PdxA family. As to quaternary structure, homodimer. Zn(2+) serves as cofactor. Requires Mg(2+) as cofactor. It depends on Co(2+) as a cofactor.

The protein localises to the cytoplasm. It catalyses the reaction 4-(phosphooxy)-L-threonine + NAD(+) = 3-amino-2-oxopropyl phosphate + CO2 + NADH. It functions in the pathway cofactor biosynthesis; pyridoxine 5'-phosphate biosynthesis; pyridoxine 5'-phosphate from D-erythrose 4-phosphate: step 4/5. Catalyzes the NAD(P)-dependent oxidation of 4-(phosphooxy)-L-threonine (HTP) into 2-amino-3-oxo-4-(phosphooxy)butyric acid which spontaneously decarboxylates to form 3-amino-2-oxopropyl phosphate (AHAP). The sequence is that of 4-hydroxythreonine-4-phosphate dehydrogenase from Ruegeria sp. (strain TM1040) (Silicibacter sp.).